A 126-amino-acid polypeptide reads, in one-letter code: MNKHNLRLVQLASELILIEIIPKLFLSQVTTISHIKREKIPPNHRKGILCMFPWQCVVYVFSNFVWLVIHRFSNGFIQFLGEPYRLMTASGTHGRIKFMVDIPIIKNTQVLRIPVLKDPKMLSKKH.

Residues 48 to 68 (ILCMFPWQCVVYVFSNFVWLV) form a helical membrane-spanning segment.

The protein resides in the membrane. This is an uncharacterized protein from Homo sapiens (Human).